The sequence spans 580 residues: Phosphatase and actin regulator 1 (580 aa).

Phosphoserine occurs at positions 67 and 78. A Phosphothreonine modification is found at Thr104. The Nuclear localization signal motif lies at 108–129 (RRRSKFANLGRIFKPWKWRKKK). An RPEL 1 repeat occupies 138–163 (AALERKISMRQSREELIKRGVLKEIY). The interval 331-351 (EQRVPCSTSYHSSGLHSSDGV) is disordered. Over residues 337-348 (STSYHSSGLHSS) the composition is skewed to low complexity. RPEL repeat units follow at residues 422-447 (DSLAIKLSNRPSKRELEEKNILPRQT), 460-485 (TKLTRRLSQRPTAEELEQRNILKPRN), and 498-523 (RRLTRKLSQRPTVEELRERKILIRFS). The disordered stretch occupies residues 462-494 (LTRRLSQRPTAEELEQRNILKPRNEQEEQEEKR). Phosphoserine is present on Ser467. A compositionally biased stretch (basic and acidic residues) spans 471-494 (TAEELEQRNILKPRNEQEEQEEKR). The residue at position 505 (Ser505) is a Phosphoserine.

Belongs to the phosphatase and actin regulator family. In terms of assembly, interacts (via RPEL repeats) with ACTA1 and PPP1CA; ACTA1 and PPP1CA compete for the same binding site. Selectively expressed in brain. High levels are found in the olfactory tubercle, nucleus accumbens core and shell, caudate-putamen, cerebral cortex, hippocampus and piriform cortex. Moderate to high levels in the olfactory bulb, arcuate and ventromedial hypothalamus, subthalamic nucleus, amygdala, lateral septum, habenula and thalamus. Low expression, if any, in substantia nigra pars compacta/pars reticula and globus pallidus (at protein level).

The protein resides in the cytoplasm. It localises to the synapse. The protein localises to the nucleus. Functionally, binds actin monomers (G actin) and plays a role in multiple processes including the regulation of actin cytoskeleton dynamics, actin stress fibers formation, cell motility and survival, formation of tubules by endothelial cells, and regulation of PPP1CA activity. Involved in the regulation of cortical neuron migration and dendrite arborization. The sequence is that of Phosphatase and actin regulator 1 (Phactr1) from Rattus norvegicus (Rat).